The chain runs to 418 residues: L-rhamnose isomerase (418 aa).

H262, D294, and D296 together coordinate Mn(2+).

The protein belongs to the rhamnose isomerase family. In terms of assembly, homotetramer. Mn(2+) is required as a cofactor.

The protein resides in the cytoplasm. It catalyses the reaction L-rhamnopyranose = L-rhamnulose. It participates in carbohydrate degradation; L-rhamnose degradation; glycerone phosphate from L-rhamnose: step 1/3. Its function is as follows. Catalyzes the interconversion of L-rhamnose and L-rhamnulose. The protein is L-rhamnose isomerase of Yersinia pseudotuberculosis serotype IB (strain PB1/+).